Reading from the N-terminus, the 579-residue chain is Protein O-linked-mannose beta-1,4-N-acetylglucosaminyltransferase 2 (579 aa).

The Cytoplasmic segment spans residues 1 to 4 (MGVG). Residues 5-25 (TLLNGLLVSVVAALLWKYSKL) form a helical; Signal-anchor for type II membrane protein membrane-spanning segment. Residues 26–579 (SEHAALLEEE…PFADVLMCRT (554 aa)) are Lumenal-facing. Asparagine 98, asparagine 275, and asparagine 542 each carry an N-linked (GlcNAc...) asparagine glycan. Residues 480–579 (HPGRVRDARC…PFADVLMCRT (100 aa)) enclose the Fibronectin type-III domain.

This sequence belongs to the glycosyltransferase 61 family.

It is found in the endoplasmic reticulum membrane. The enzyme catalyses 3-O-(alpha-D-mannosyl)-L-threonyl-[protein] + UDP-N-acetyl-alpha-D-glucosamine = 3-O-(N-acetyl-beta-D-glucosaminyl-(1-&gt;4)-alpha-D-mannosyl)-L-threonyl-[protein] + UDP + H(+). The protein operates within protein modification; protein glycosylation. Functionally, O-linked mannose beta-1,4-N-acetylglucosaminyltransferase that transfers UDP-N-acetyl-D-glucosamine to the 4-position of the mannose to generate N-acetyl-D-glucosamine-beta-1,4-O-D-mannosylprotein. Involved in the biosynthesis of the phosphorylated O-mannosyl trisaccharide (N-acetylgalactosamine-beta-3-N-acetylglucosamine-beta-4-(phosphate-6-)mannose), a carbohydrate structure present in alpha-dystroglycan (DAG1), which is required for binding laminin G-like domain-containing extracellular proteins with high affinity. The chain is Protein O-linked-mannose beta-1,4-N-acetylglucosaminyltransferase 2 (pomgnt2) from Tetraodon nigroviridis (Spotted green pufferfish).